The sequence spans 180 residues: Large ribosomal subunit protein uL5 (180 aa).

This sequence belongs to the universal ribosomal protein uL5 family. Part of the 50S ribosomal subunit; part of the 5S rRNA/L5/L18/L25 subcomplex. Contacts the 5S rRNA and the P site tRNA. Forms a bridge to the 30S subunit in the 70S ribosome.

This is one of the proteins that bind and probably mediate the attachment of the 5S RNA into the large ribosomal subunit, where it forms part of the central protuberance. In the 70S ribosome it contacts protein S13 of the 30S subunit (bridge B1b), connecting the 2 subunits; this bridge is implicated in subunit movement. Contacts the P site tRNA; the 5S rRNA and some of its associated proteins might help stabilize positioning of ribosome-bound tRNAs. This Ruminiclostridium cellulolyticum (strain ATCC 35319 / DSM 5812 / JCM 6584 / H10) (Clostridium cellulolyticum) protein is Large ribosomal subunit protein uL5.